The primary structure comprises 104 residues: UPF0125 protein PSPTO_4512 (104 aa).

The protein belongs to the UPF0125 (RnfH) family.

This is UPF0125 protein PSPTO_4512 from Pseudomonas syringae pv. tomato (strain ATCC BAA-871 / DC3000).